We begin with the raw amino-acid sequence, 220 residues long: MNLAKYIDHTALKPETTKAQIAQLAQEAREYEFMSVCVNPAHVKYAKSLLEGTDVLVCTVIGFPLGANTPAVKAFETKDAIADGAGEVDMVINIGALKDKNYDLVAEDIKAVVDAAGDVTTKVIIETALLTDEEKVKACEIAQAQGADFVKTSTGFSTGGATKEDVALMRKTVGPDMGVKASGGVRSYEDVMTMIEAGATRIGASAGVQILKGEEAKGDY.

Catalysis depends on aspartate 89, which acts as the Proton donor/acceptor. Residue lysine 151 is the Schiff-base intermediate with acetaldehyde of the active site. Lysine 180 (proton donor/acceptor) is an active-site residue.

This sequence belongs to the DeoC/FbaB aldolase family. DeoC type 1 subfamily.

The protein localises to the cytoplasm. It carries out the reaction 2-deoxy-D-ribose 5-phosphate = D-glyceraldehyde 3-phosphate + acetaldehyde. Its pathway is carbohydrate degradation; 2-deoxy-D-ribose 1-phosphate degradation; D-glyceraldehyde 3-phosphate and acetaldehyde from 2-deoxy-alpha-D-ribose 1-phosphate: step 2/2. In terms of biological role, catalyzes a reversible aldol reaction between acetaldehyde and D-glyceraldehyde 3-phosphate to generate 2-deoxy-D-ribose 5-phosphate. The sequence is that of Deoxyribose-phosphate aldolase from Macrococcus caseolyticus (strain JCSC5402) (Macrococcoides caseolyticum).